We begin with the raw amino-acid sequence, 120 residues long: Reprimo-like protein (120 aa).

The chain crosses the membrane as a helical span at residues valine 67 to leucine 87. Serine 109 is subject to Phosphoserine.

The protein belongs to the reprimo family.

Its subcellular location is the membrane. This is Reprimo-like protein (RPRML) from Homo sapiens (Human).